A 308-amino-acid polypeptide reads, in one-letter code: Tetraacyldisaccharide 4'-kinase (308 aa).

63 to 70 (SFGGNGKT) lines the ATP pocket.

It belongs to the LpxK family.

The enzyme catalyses a lipid A disaccharide + ATP = a lipid IVA + ADP + H(+). It functions in the pathway glycolipid biosynthesis; lipid IV(A) biosynthesis; lipid IV(A) from (3R)-3-hydroxytetradecanoyl-[acyl-carrier-protein] and UDP-N-acetyl-alpha-D-glucosamine: step 6/6. In terms of biological role, transfers the gamma-phosphate of ATP to the 4'-position of a tetraacyldisaccharide 1-phosphate intermediate (termed DS-1-P) to form tetraacyldisaccharide 1,4'-bis-phosphate (lipid IVA). This Campylobacter jejuni subsp. jejuni serotype O:6 (strain 81116 / NCTC 11828) protein is Tetraacyldisaccharide 4'-kinase.